A 146-amino-acid chain; its full sequence is Nucleoside diphosphate kinase (146 aa).

The ATP site is built by K11, F59, R87, T93, R104, and N114. H117 functions as the Pros-phosphohistidine intermediate in the catalytic mechanism.

Belongs to the NDK family. As to quaternary structure, homotetramer. Mg(2+) is required as a cofactor.

It is found in the cytoplasm. It catalyses the reaction a 2'-deoxyribonucleoside 5'-diphosphate + ATP = a 2'-deoxyribonucleoside 5'-triphosphate + ADP. It carries out the reaction a ribonucleoside 5'-diphosphate + ATP = a ribonucleoside 5'-triphosphate + ADP. Major role in the synthesis of nucleoside triphosphates other than ATP. The ATP gamma phosphate is transferred to the NDP beta phosphate via a ping-pong mechanism, using a phosphorylated active-site intermediate. This Anaplasma marginale (strain Florida) protein is Nucleoside diphosphate kinase.